The primary structure comprises 226 residues: 7-cyano-7-deazaguanine synthase (226 aa).

10–20 is a binding site for ATP; that stretch reads LSGGLDSATAA. 4 residues coordinate Zn(2+): cysteine 191, cysteine 199, cysteine 202, and cysteine 205.

This sequence belongs to the QueC family. Zn(2+) serves as cofactor.

It carries out the reaction 7-carboxy-7-deazaguanine + NH4(+) + ATP = 7-cyano-7-deazaguanine + ADP + phosphate + H2O + H(+). Its pathway is purine metabolism; 7-cyano-7-deazaguanine biosynthesis. Its function is as follows. Catalyzes the ATP-dependent conversion of 7-carboxy-7-deazaguanine (CDG) to 7-cyano-7-deazaguanine (preQ(0)). This chain is 7-cyano-7-deazaguanine synthase, found in Parasynechococcus marenigrum (strain WH8102).